The primary structure comprises 331 residues: Phenylalanine--tRNA ligase alpha subunit (331 aa).

E252 contacts Mg(2+).

Belongs to the class-II aminoacyl-tRNA synthetase family. Phe-tRNA synthetase alpha subunit type 1 subfamily. In terms of assembly, tetramer of two alpha and two beta subunits. Requires Mg(2+) as cofactor.

The protein localises to the cytoplasm. The enzyme catalyses tRNA(Phe) + L-phenylalanine + ATP = L-phenylalanyl-tRNA(Phe) + AMP + diphosphate + H(+). The polypeptide is Phenylalanine--tRNA ligase alpha subunit (Stenotrophomonas maltophilia (strain R551-3)).